A 232-amino-acid chain; its full sequence is GDT1-like protein 5 (232 aa).

6 consecutive transmembrane segments (helical) span residues 13–33 (LAMT…AILA), 40–60 (LVLA…VSLG), 72–92 (THHV…WEGF), 135–155 (PFVL…TFFG), 175–195 (FGVV…AVMG), and 207–227 (MVGL…YLSG).

It belongs to the GDT1 family.

The protein localises to the membrane. In Oryza sativa subsp. japonica (Rice), this protein is GDT1-like protein 5.